A 224-amino-acid polypeptide reads, in one-letter code: Redox-sensing transcriptional repressor Rex (224 aa).

The segment at residues 17–56 (RYHRCLEELLKNDIKRISSKELSERMGVTASQIRQDLNNF) is a DNA-binding region (H-T-H motif). 91–96 (GAGNLG) provides a ligand contact to NAD(+).

The protein belongs to the transcriptional regulatory Rex family. As to quaternary structure, homodimer.

It is found in the cytoplasm. Its function is as follows. Modulates transcription in response to changes in cellular NADH/NAD(+) redox state. The protein is Redox-sensing transcriptional repressor Rex of Caldanaerobacter subterraneus subsp. tengcongensis (strain DSM 15242 / JCM 11007 / NBRC 100824 / MB4) (Thermoanaerobacter tengcongensis).